Reading from the N-terminus, the 654-residue chain is DNA-directed RNA polymerase III subunit RPC3 (654 aa).

The residue at position 27 (Thr-27) is a Phosphothreonine. 2 disordered regions span residues 381-401 and 422-448; these read LSRK…ASLP and KSLQ…EDPH. A phosphoserine mark is found at Ser-392 and Ser-394. Positions 429–444 are enriched in acidic residues; that stretch reads DTQEEDEEEEDLDADT. The tract at residues 581-602 is leucine-zipper; that stretch reads LEWNMANLLFKKEKLKQENSTL.

It belongs to the RNA polymerase beta chain family. As to quaternary structure, component of the RNA polymerase III (Pol III) complex consisting of 17 subunits.

Its subcellular location is the cytoplasm. It localises to the nucleus. Its function is as follows. DNA-dependent RNA polymerase catalyzes the transcription of DNA into RNA using the four ribonucleoside triphosphates as substrates. Specific core component of RNA polymerase III which synthesizes small RNAs, such as 5S rRNA and tRNAs. This chain is DNA-directed RNA polymerase III subunit RPC3 (RPC82), found in Saccharomyces cerevisiae (strain YJM789) (Baker's yeast).